The sequence spans 734 residues: DNA ligase (734 aa).

NAD(+) contacts are provided by residues aspartate 42–aspartate 46, serine 91–leucine 92, and glutamate 125. Residue lysine 127 is the N6-AMP-lysine intermediate of the active site. Residues arginine 148, glutamate 185, lysine 301, and lysine 325 each coordinate NAD(+). Residues cysteine 430, cysteine 433, cysteine 454, and cysteine 460 each contribute to the Zn(2+) site. The region spanning serine 655–alanine 734 is the BRCT domain.

This sequence belongs to the NAD-dependent DNA ligase family. LigA subfamily. Requires Mg(2+) as cofactor. Mn(2+) is required as a cofactor.

The enzyme catalyses NAD(+) + (deoxyribonucleotide)n-3'-hydroxyl + 5'-phospho-(deoxyribonucleotide)m = (deoxyribonucleotide)n+m + AMP + beta-nicotinamide D-nucleotide.. Its function is as follows. DNA ligase that catalyzes the formation of phosphodiester linkages between 5'-phosphoryl and 3'-hydroxyl groups in double-stranded DNA using NAD as a coenzyme and as the energy source for the reaction. It is essential for DNA replication and repair of damaged DNA. This Mesorhizobium japonicum (strain LMG 29417 / CECT 9101 / MAFF 303099) (Mesorhizobium loti (strain MAFF 303099)) protein is DNA ligase.